The sequence spans 158 residues: NADH-quinone oxidoreductase subunit B (158 aa).

Residues cysteine 37, cysteine 38, cysteine 102, and cysteine 132 each contribute to the [4Fe-4S] cluster site.

The protein belongs to the complex I 20 kDa subunit family. As to quaternary structure, NDH-1 is composed of 14 different subunits. Subunits NuoB, C, D, E, F, and G constitute the peripheral sector of the complex. [4Fe-4S] cluster is required as a cofactor.

Its subcellular location is the cell inner membrane. The catalysed reaction is a quinone + NADH + 5 H(+)(in) = a quinol + NAD(+) + 4 H(+)(out). NDH-1 shuttles electrons from NADH, via FMN and iron-sulfur (Fe-S) centers, to quinones in the respiratory chain. Couples the redox reaction to proton translocation (for every two electrons transferred, four hydrogen ions are translocated across the cytoplasmic membrane), and thus conserves the redox energy in a proton gradient. In Leptothrix cholodnii (strain ATCC 51168 / LMG 8142 / SP-6) (Leptothrix discophora (strain SP-6)), this protein is NADH-quinone oxidoreductase subunit B.